The primary structure comprises 610 residues: Elongation factor 4 (610 aa).

The tr-type G domain occupies 14 to 196 (NRIRNFSIIA…ALVANIPPPK (183 aa)). GTP-binding positions include 26–31 (DHGKST) and 143–146 (NKID).

The protein belongs to the TRAFAC class translation factor GTPase superfamily. Classic translation factor GTPase family. LepA subfamily.

The protein localises to the cell inner membrane. It catalyses the reaction GTP + H2O = GDP + phosphate + H(+). Required for accurate and efficient protein synthesis under certain stress conditions. May act as a fidelity factor of the translation reaction, by catalyzing a one-codon backward translocation of tRNAs on improperly translocated ribosomes. Back-translocation proceeds from a post-translocation (POST) complex to a pre-translocation (PRE) complex, thus giving elongation factor G a second chance to translocate the tRNAs correctly. Binds to ribosomes in a GTP-dependent manner. In Legionella pneumophila (strain Paris), this protein is Elongation factor 4.